The primary structure comprises 456 residues: RuvB-like 1 (456 aa).

Lys2 is covalently cross-linked (Glycyl lysine isopeptide (Lys-Gly) (interchain with G-Cter in SUMO2)). 70–77 (GPPGTGKT) is an ATP binding site. Residue Lys225 forms a Glycyl lysine isopeptide (Lys-Gly) (interchain with G-Cter in SUMO1); alternate linkage. Residue Lys225 forms a Glycyl lysine isopeptide (Lys-Gly) (interchain with G-Cter in SUMO2); alternate linkage. Lys445 is covalently cross-linked (Glycyl lysine isopeptide (Lys-Gly) (interchain with G-Cter in SUMO2)). Lys453 bears the N6-acetyllysine mark.

This sequence belongs to the RuvB family. As to quaternary structure, forms homohexameric rings. Can form a dodecamer with RUVBL2 made of two stacked hexameric rings; however, even though RUVBL1 and RUVBL2 are present in equimolar ratio, the oligomeric status of each hexamer is not known. Oligomerization may regulate binding to nucleic acids and conversely, binding to nucleic acids may affect the dodecameric assembly. Interaction of the complex with DHX34 results in conformational changes of the N-terminus of the RUVBL2 subunits, resulting in loss of nucleotide binding ability and ATP hydrolysis of the complex. Interacts with the transcriptional activation domain of MYC. Component of the RNA polymerase II holoenzyme complex. May also act to bridge the LEF1/TCF1-CTNNB1 complex and TBP. Component of the NuA4 histone acetyltransferase complex which contains the catalytic subunit KAT5/TIP60 and the subunits EP400, TRRAP/PAF400, BRD8/SMAP, EPC1, DMAP1/DNMAP1, RUVBL1/TIP49, RUVBL2, ING3, actin, ACTL6A/BAF53A, MORF4L1/MRG15, MORF4L2/MRGX, MRGBP, YEATS4/GAS41, VPS72/YL1 and MEAF6. The NuA4 complex interacts with MYC and the adenovirus E1A protein. RUVBL1 interacts with EP400. Component of a NuA4-related complex which contains EP400, TRRAP/PAF400, SRCAP, BRD8/SMAP, EPC1, DMAP1/DNMAP1, RUVBL1/TIP49, RUVBL2, actin, ACTL6A/BAF53A, VPS72 and YEATS4/GAS41. Component of the BAF53 complex, at least composed of ACTL6A/BAF53A, RUVBL1/TIP49, SMARCA2/BRM, and TRRAP/PAF400. Component of some MLL1/MLL complex, at least composed of the core components KMT2A/MLL1, ASH2L, HCFC1/HCF1, WDR5 and RBBP5, as well as the facultative components BACC1, CHD8, E2F6, HSP70, INO80C, KANSL1, LAS1L, MAX, MCRS1, MGA, MYST1/MOF, PELP1, PHF20, PRP31, RING2, RUVB1/TIP49A, RUVB2/TIP49B, SENP3, TAF1, TAF4, TAF6, TAF7, TAF9 and TEX10. Associates with alpha and gamma tubulins, particularly during metaphase and early anaphase. Interacts with NPAT. Component of the chromatin-remodeling INO80 complex; specifically part of a complex module associated with the helicase ATP-binding and the helicase C-terminal domain of INO80. Interacts with IGHMBP2. Interacts with OFD1. Interacts with HINT1. Component of a complex with USP49 and PSMC5. Component of a SWR1-like complex. Component of the R2TP complex composed at least of RUVBL1, RUVBL2, RPAP3 and PIHD1. Component of the PAQosome complex which is responsible for the biogenesis of several protein complexes and which consists of R2TP complex members RUVBL1, RUVBL2, RPAP3 and PIH1D1, URI complex members PFDN2, PFDN6, PDRG1, UXT and URI1 as well as ASDURF, POLR2E and DNAAF10/WDR92. Interacts with PIH1D1. Interacts with ITFG1. Interacts with WAC; WAC positively regulates MTOR activity by promoting the assembly of the TTT complex composed of TELO2, TTI1 and TTI2 and the RUVBL complex composed of RUVBL1 and RUVBL2 into the TTT-RUVBL complex which leads to the dimerization of the mTORC1 complex and its subsequent activation. The RUVBL1/RUVBL2 complex interacts with ZNHIT1 (via HIT-type zinc finger), ZNHIT3 (via HIT-type zinc finger), ZNHIT6 (via HIT-type zinc finger) and DDX59/ZNHIT5 (via HIT-type zinc finger) in the presence of ADP. Interacts with NOPCHAP1; the interaction is direct and disrupted upon ATP binding. Interacts with SMG1. Interacts with NOP2, NOP56 and NUFIP1. In terms of assembly, (Microbial infection) Interacts with Mumps L polymerase; this interaction regulates the viral transcription. Ubiquitously expressed with high expression in heart, skeletal muscle and testis.

It localises to the nucleus matrix. It is found in the nucleus. Its subcellular location is the nucleoplasm. The protein localises to the cytoplasm. The protein resides in the membrane. It localises to the cytoskeleton. It is found in the microtubule organizing center. Its subcellular location is the centrosome. The protein localises to the dynein axonemal particle. It carries out the reaction ATP + H2O = ADP + phosphate + H(+). Its function is as follows. Possesses single-stranded DNA-stimulated ATPase and ATP-dependent DNA helicase (3' to 5') activity; hexamerization is thought to be critical for ATP hydrolysis and adjacent subunits in the ring-like structure contribute to the ATPase activity. Component of the NuA4 histone acetyltransferase complex which is involved in transcriptional activation of select genes principally by acetylation of nucleosomal histones H4 and H2A. This modification may both alter nucleosome-DNA interactions and promote interaction of the modified histones with other proteins which positively regulate transcription. This complex may be required for the activation of transcriptional programs associated with oncogene and proto-oncogene mediated growth induction, tumor suppressor mediated growth arrest and replicative senescence, apoptosis, and DNA repair. The NuA4 complex ATPase and helicase activities seem to be, at least in part, contributed by the association of RUVBL1 and RUVBL2 with EP400. NuA4 may also play a direct role in DNA repair when recruited to sites of DNA damage. Component of a SWR1-like complex that specifically mediates the removal of histone H2A.Z/H2AZ1 from the nucleosome. Proposed core component of the chromatin remodeling INO80 complex which exhibits DNA- and nucleosome-activated ATPase activity and catalyzes ATP-dependent nucleosome sliding. Plays an essential role in oncogenic transformation by MYC and also modulates transcriptional activation by the LEF1/TCF1-CTNNB1 complex. Essential for cell proliferation. May be able to bind plasminogen at cell surface and enhance plasminogen activation. This chain is RuvB-like 1, found in Homo sapiens (Human).